The primary structure comprises 510 residues: NAD(P)H-quinone oxidoreductase subunit 2 B, chloroplastic (510 aa).

Transmembrane regions (helical) follow at residues 26–46, 57–77, 99–119, 124–144, 149–169, 183–203, 227–247, 295–315, 323–342, 354–374, 395–415, 418–438, and 484–504; these read LFDG…ILLL, IPWF…ALLF, IFQF…VEYI, MAIT…MFLC, LITI…LSGY, YLLM…WLYG, PGIS…LSPA, WHPL…LIAI, MLAY…IIVG, YMLF…LFGL, ALSL…AGFF, LHLF…IGLF, and MIVC…IIAI.

This sequence belongs to the complex I subunit 2 family. As to quaternary structure, NDH is composed of at least 16 different subunits, 5 of which are encoded in the nucleus.

The protein localises to the plastid. It is found in the chloroplast thylakoid membrane. It carries out the reaction a plastoquinone + NADH + (n+1) H(+)(in) = a plastoquinol + NAD(+) + n H(+)(out). It catalyses the reaction a plastoquinone + NADPH + (n+1) H(+)(in) = a plastoquinol + NADP(+) + n H(+)(out). In terms of biological role, NDH shuttles electrons from NAD(P)H:plastoquinone, via FMN and iron-sulfur (Fe-S) centers, to quinones in the photosynthetic chain and possibly in a chloroplast respiratory chain. The immediate electron acceptor for the enzyme in this species is believed to be plastoquinone. Couples the redox reaction to proton translocation, and thus conserves the redox energy in a proton gradient. The polypeptide is NAD(P)H-quinone oxidoreductase subunit 2 B, chloroplastic (Oenothera argillicola (Appalachian evening primrose)).